The following is a 101-amino-acid chain: Thylakoid-associated protein slr0729 (101 aa).

It localises to the cellular thylakoid membrane. This is Thylakoid-associated protein slr0729 from Synechocystis sp. (strain ATCC 27184 / PCC 6803 / Kazusa).